The chain runs to 203 residues: Cilia- and flagella-associated protein 20 (203 aa).

It belongs to the CFAP20 family.

Its subcellular location is the nucleus. It is found in the cytoplasm. The protein localises to the cytoskeleton. The protein resides in the microtubule organizing center. It localises to the centrosome. Its subcellular location is the centriole. It is found in the cilium basal body. The protein localises to the cilium axoneme. Cilium- and flagellum-specific protein that plays a role in axonemal structure organization and motility. Microtubule inner protein (MIP) part of the dynein-decorated doublet microtubules (DMTs) in cilia axoneme, which is required for motile cilia beating. Involved in the regulation of the size and morphology of cilia. Required for axonemal microtubules polyglutamylation. In Caenorhabditis elegans, this protein is Cilia- and flagella-associated protein 20.